Here is a 338-residue protein sequence, read N- to C-terminus: Ketol-acid reductoisomerase (NADP(+)) (338 aa).

The KARI N-terminal Rossmann domain occupies 1–181 (MKVFYDKDAD…GGGRAGIIET (181 aa)). Residues 24–27 (YGSQ), arginine 47, and serine 52 each bind NADP(+). Histidine 107 is an active-site residue. Glycine 133 is an NADP(+) binding site. The KARI C-terminal knotted domain occupies 182 to 327 (NFREETETDL…AKLRAMMPWI (146 aa)). The Mg(2+) site is built by aspartate 190, glutamate 194, glutamate 226, and glutamate 230. Serine 251 contacts substrate.

It belongs to the ketol-acid reductoisomerase family. The cofactor is Mg(2+).

The catalysed reaction is (2R)-2,3-dihydroxy-3-methylbutanoate + NADP(+) = (2S)-2-acetolactate + NADPH + H(+). It catalyses the reaction (2R,3R)-2,3-dihydroxy-3-methylpentanoate + NADP(+) = (S)-2-ethyl-2-hydroxy-3-oxobutanoate + NADPH + H(+). It functions in the pathway amino-acid biosynthesis; L-isoleucine biosynthesis; L-isoleucine from 2-oxobutanoate: step 2/4. The protein operates within amino-acid biosynthesis; L-valine biosynthesis; L-valine from pyruvate: step 2/4. Its function is as follows. Involved in the biosynthesis of branched-chain amino acids (BCAA). Catalyzes an alkyl-migration followed by a ketol-acid reduction of (S)-2-acetolactate (S2AL) to yield (R)-2,3-dihydroxy-isovalerate. In the isomerase reaction, S2AL is rearranged via a Mg-dependent methyl migration to produce 3-hydroxy-3-methyl-2-ketobutyrate (HMKB). In the reductase reaction, this 2-ketoacid undergoes a metal-dependent reduction by NADPH to yield (R)-2,3-dihydroxy-isovalerate. This is Ketol-acid reductoisomerase (NADP(+)) from Ralstonia pickettii (strain 12J).